The chain runs to 296 residues: uncharacterized protein (296 aa).

A run of 2 helical transmembrane segments spans residues 82-102 (VVAP…WSVQ) and 117-137 (ISVL…SAIF).

It localises to the cell membrane. This is an uncharacterized protein from Sinorhizobium fredii (strain NBRC 101917 / NGR234).